The following is a 360-amino-acid chain: Phenylalanine--tRNA ligase alpha subunit (360 aa).

E260 contacts Mg(2+).

This sequence belongs to the class-II aminoacyl-tRNA synthetase family. Phe-tRNA synthetase alpha subunit type 1 subfamily. Tetramer of two alpha and two beta subunits. Requires Mg(2+) as cofactor.

It is found in the cytoplasm. The catalysed reaction is tRNA(Phe) + L-phenylalanine + ATP = L-phenylalanyl-tRNA(Phe) + AMP + diphosphate + H(+). This chain is Phenylalanine--tRNA ligase alpha subunit, found in Methylocella silvestris (strain DSM 15510 / CIP 108128 / LMG 27833 / NCIMB 13906 / BL2).